The primary structure comprises 315 residues: WD repeat domain-containing protein 83 (315 aa).

WD repeat units lie at residues 23-62 (CQQG…LLKT), 65-104 (GHGY…VTRK), 107-146 (GHAG…MEPI), 151-188 (ESQD…LQVD), 189-228 (YIGS…MLGE), 233-272 (VNKG…LTLK), and 275-313 (VGKA…AAEN).

This sequence belongs to the WD repeat MORG1 family.

It is found in the cytoplasm. Its function is as follows. Molecular scaffold protein for various multimeric protein complexes. Acts as a module in the assembly of a multicomponent scaffold for the ERK pathway, linking ERK responses to specific agonists. Also involved in response to hypoxia by acting as a negative regulator of HIF1A/HIF-1-alpha. The sequence is that of WD repeat domain-containing protein 83 (wdr83) from Danio rerio (Zebrafish).